We begin with the raw amino-acid sequence, 410 residues long: Argininosuccinate synthase (410 aa).

10–18 is a binding site for ATP; the sequence is AYSGGLDTS. L-citrulline is bound by residues Tyr88 and Ser93. Gly118 is an ATP binding site. L-aspartate contacts are provided by Thr120, Asn124, and Asp125. Asn124 lines the L-citrulline pocket. Positions 128, 177, 186, 262, and 274 each coordinate L-citrulline.

It belongs to the argininosuccinate synthase family. Type 1 subfamily. Homotetramer.

The protein localises to the cytoplasm. It carries out the reaction L-citrulline + L-aspartate + ATP = 2-(N(omega)-L-arginino)succinate + AMP + diphosphate + H(+). It functions in the pathway amino-acid biosynthesis; L-arginine biosynthesis; L-arginine from L-ornithine and carbamoyl phosphate: step 2/3. The sequence is that of Argininosuccinate synthase from Thermoanaerobacter sp. (strain X514).